The following is a 355-amino-acid chain: MSGQGKRLMVMAGGTGGHVFPGLAVAHHLMAQGWQVRWLGTADRMEADLVPKHGIEIDFIRISGLRGKGIKALIAAPLRIFNAWRQARAIMKAYKPDVVLGMGGYVSGPGGLAAWSLGIPVVLHEQNGIAGLTNKWLAKIATKVMQAFPGAFPNAEVVGNPVRTDVLALPLPQQRLAGREGPVRVLVVGGSQGARILNQTMPQVAAKLGDSVTIWHQSGKGSQQSVEQAYAEAGQPQHKVTEFIDDMAAAYAWADVVVCRSGALTVSEIAAAGLPALFVPFQHKDRQQYWNALPLEKAGAAKIIEQPQLSVDAVANTLAGWSRETLLTMAERARAASIPDATERVANEVSRVARA.

UDP-N-acetyl-alpha-D-glucosamine-binding positions include 15–17 (TGG), N127, R163, S191, I244, 263–268 (ALTVSE), and Q288.

It belongs to the glycosyltransferase 28 family. MurG subfamily.

It is found in the cell inner membrane. The catalysed reaction is di-trans,octa-cis-undecaprenyl diphospho-N-acetyl-alpha-D-muramoyl-L-alanyl-D-glutamyl-meso-2,6-diaminopimeloyl-D-alanyl-D-alanine + UDP-N-acetyl-alpha-D-glucosamine = di-trans,octa-cis-undecaprenyl diphospho-[N-acetyl-alpha-D-glucosaminyl-(1-&gt;4)]-N-acetyl-alpha-D-muramoyl-L-alanyl-D-glutamyl-meso-2,6-diaminopimeloyl-D-alanyl-D-alanine + UDP + H(+). Its pathway is cell wall biogenesis; peptidoglycan biosynthesis. Functionally, cell wall formation. Catalyzes the transfer of a GlcNAc subunit on undecaprenyl-pyrophosphoryl-MurNAc-pentapeptide (lipid intermediate I) to form undecaprenyl-pyrophosphoryl-MurNAc-(pentapeptide)GlcNAc (lipid intermediate II). The protein is UDP-N-acetylglucosamine--N-acetylmuramyl-(pentapeptide) pyrophosphoryl-undecaprenol N-acetylglucosamine transferase of Escherichia coli (strain K12 / MC4100 / BW2952).